The sequence spans 397 residues: MAIETVASTDAFKVLVAEVTAQEGYREPMAFGIARVDRGQKNAEKVLQANFPLINWKENFGSAAVFIKALQEAKCDVDFSGSEFVATINDNFVANAMAAFAPYLAEATGDSHKNVQVIKTLAKMEDIGKNFRIVFLFEDANPESVEAVYLKLYALSLRKAELRKVNLNGAFGILSNVAWVGNTPYELDYLRENEIEMKLNGTYPTVDSVDKFPRFLQHVIPDDNTRILEASKVRMGAQLAAGTTVMPGASYINFNAGTLGPVMVEGRISSSAIVGAGSDVGGGASILGVLSGTDGNPISIGENTLLGANSVTGLPLGDGCIVDAGITILAGTKIKIAPEELEKIKAANPDAKLDNKTTFKGEELQGLNGIHYRQNSLTGEIIARRSTREVKLNEDLH.

Catalysis depends on Glu265, which acts as the Acyl-anhydride intermediate. Succinyl-CoA contacts are provided by residues Arg267, Gly282, Ser285, Ala308, 323–324 (DA), Gly331, Lys360, and 373–376 (RQNS).

This sequence belongs to the type 2 tetrahydrodipicolinate N-succinyltransferase family. Homotrimer.

Its subcellular location is the cytoplasm. The enzyme catalyses (S)-2,3,4,5-tetrahydrodipicolinate + succinyl-CoA + H2O = (S)-2-succinylamino-6-oxoheptanedioate + CoA. It participates in amino-acid biosynthesis; L-lysine biosynthesis via DAP pathway; LL-2,6-diaminopimelate from (S)-tetrahydrodipicolinate (succinylase route): step 1/3. Catalyzes the conversion of the cyclic tetrahydrodipicolinate (THDP) into the acyclic N-succinyl-L-2-amino-6-oxopimelate using succinyl-CoA. The polypeptide is 2,3,4,5-tetrahydropyridine-2,6-dicarboxylate N-succinyltransferase (Sulfurovum sp. (strain NBC37-1)).